The primary structure comprises 506 residues: Putative amidase (506 aa).

Residues Lys121 and Ser196 each act as charge relay system in the active site. Ser220 acts as the Acyl-ester intermediate in catalysis.

Belongs to the amidase family.

It catalyses the reaction a monocarboxylic acid amide + H2O = a monocarboxylate + NH4(+). The polypeptide is Putative amidase (Synechocystis sp. (strain ATCC 27184 / PCC 6803 / Kazusa)).